The following is an 86-amino-acid chain: Small ribosomal subunit protein uS15 (86 aa).

This sequence belongs to the universal ribosomal protein uS15 family. In terms of assembly, part of the 30S ribosomal subunit. Forms a bridge to the 50S subunit in the 70S ribosome, contacting the 23S rRNA.

Its function is as follows. One of the primary rRNA binding proteins, it binds directly to 16S rRNA where it helps nucleate assembly of the platform of the 30S subunit by binding and bridging several RNA helices of the 16S rRNA. Forms an intersubunit bridge (bridge B4) with the 23S rRNA of the 50S subunit in the ribosome. The chain is Small ribosomal subunit protein uS15 from Mycoplasma genitalium (strain ATCC 33530 / DSM 19775 / NCTC 10195 / G37) (Mycoplasmoides genitalium).